Consider the following 367-residue polypeptide: Aflatoxin B1 aldehyde reductase member 2 (367 aa).

Residues 1–31 (MLRAASRAVGRAAVRSAQRSGTSVGRPLAMS) are compositionally biased toward low complexity. Positions 1–45 (MLRAASRAVGRAAVRSAQRSGTSVGRPLAMSRPPPPRAASGAPLR) are disordered. The transit peptide at 1 to 46 (MLRAASRAVGRAAVRSAQRSGTSVGRPLAMSRPPPPRAASGAPLRP) directs the protein to the mitochondrion. Ser40 bears the Phosphoserine mark. Thr48 carries the phosphothreonine modification. Position 80 (Asp80) interacts with NADP(+). Residue Tyr85 is the Proton donor of the active site. Lys136 is subject to N6-acetyllysine. Residue His149 coordinates substrate. NADP(+) contacts are provided by residues 179 to 180 (SN), Gln205, 234 to 244 (NPLAGGLLTGK), and Arg258. Lys244 is subject to N6-succinyllysine. Substrate is bound by residues Tyr268 and Arg271. NADP(+) is bound at residue 326–334 (SSLEQLEQN). Arg367 provides a ligand contact to substrate.

The protein belongs to the aldo/keto reductase family. Aldo/keto reductase 2 subfamily. As to quaternary structure, homodimer. As to expression, expressed in liver, kidney, testis and brain with low levels in skeletal muscle, spleen, heart and lung.

Its subcellular location is the mitochondrion. The protein resides in the golgi apparatus. The protein localises to the cytoplasm. The catalysed reaction is 4-hydroxybutanoate + NADP(+) = succinate semialdehyde + NADPH + H(+). With respect to regulation, inhibited by citrate, succinate and tartrate. Catalyzes the NADPH-dependent reduction of succinic semialdehyde to gamma-hydroxybutyrate. May have an important role in producing the neuromodulator gamma-hydroxybutyrate (GHB). Has broad substrate specificity. Can reduce the dialdehyde protein-binding form of aflatoxin B1 (AFB1) to the non-binding AFB1 dialcohol. May be involved in protection of liver against the toxic and carcinogenic effects of AFB1, a potent hepatocarcinogen. The sequence is that of Aflatoxin B1 aldehyde reductase member 2 from Mus musculus (Mouse).